The following is a 189-amino-acid chain: dCTP deaminase (189 aa).

DCTP contacts are provided by residues 112 to 117 (KSTYAR), 136 to 138 (TLE), glutamine 157, tyrosine 171, and glutamine 181. Glutamate 138 functions as the Proton donor/acceptor in the catalytic mechanism.

Belongs to the dCTP deaminase family. In terms of assembly, homotrimer.

It catalyses the reaction dCTP + H2O + H(+) = dUTP + NH4(+). It participates in pyrimidine metabolism; dUMP biosynthesis; dUMP from dCTP (dUTP route): step 1/2. Catalyzes the deamination of dCTP to dUTP. This Xanthomonas axonopodis pv. citri (strain 306) protein is dCTP deaminase.